The chain runs to 556 residues: Formate--tetrahydrofolate ligase (556 aa).

Thr-65–Ser-72 is a binding site for ATP.

The protein belongs to the formate--tetrahydrofolate ligase family.

It carries out the reaction (6S)-5,6,7,8-tetrahydrofolate + formate + ATP = (6R)-10-formyltetrahydrofolate + ADP + phosphate. Its pathway is one-carbon metabolism; tetrahydrofolate interconversion. The polypeptide is Formate--tetrahydrofolate ligase (Clostridium perfringens (strain SM101 / Type A)).